Consider the following 146-residue polypeptide: MVMGPHLLLLVFILGLGLTPPTLAQNDSRYIKFLDQHYDPKTKNGNDKYCEKMMRLRNMISPCKEINTFIHGNKASIKAICGNQNGQPYNGNQRISTSAFQVTICRHIGGSPRPPCRYRATAGFRNIVIACENGLPVHLDESIFRP.

The N-terminal stretch at 1–24 is a signal peptide; the sequence is MVMGPHLLLLVFILGLGLTPPTLA. The residue at position 25 (glutamine 25) is a Pyrrolidone carboxylic acid. The active-site Proton acceptor is histidine 37. 3 disulfides stabilise this stretch: cysteine 50-cysteine 105, cysteine 63-cysteine 116, and cysteine 81-cysteine 131. The Nucleolar localization signal motif lies at 55 to 59; sequence RLRNM. Residues cysteine 105 and isoleucine 127 each coordinate tRNA. Catalysis depends on histidine 138, which acts as the Proton donor.

Belongs to the pancreatic ribonuclease family. Homodimer. Interacts with RNH1; inhibiting ANG ribonuclease activity. Interacts with PCNA.

The protein localises to the secreted. It localises to the nucleus. The protein resides in the nucleolus. Its subcellular location is the cytoplasm. It is found in the stress granule. With respect to regulation, has weak tRNA ribonuclease activity by itself due to partial autoinhibition by its C-terminus, which folds into a short alpha-helix that partially occludes the substrate-binding site. In absence of stress, the ribonuclease activity is inhibited by RNH1 in the cytoplasm. In response to stress, dissociates from RNH1 in the cytoplasm and associates with cytoplasmic ribosomes with vacant A-sites: ribosomes directly activate the tRNA ribonuclease activity of ANG by refolding the C-terminal alpha-helix. In response to stress, the angiogenic activity of ANG is inhibited by RNH1 in the nucleus. Its function is as follows. Secreted ribonuclease that can either promote or restrict cell proliferation of target cells, depending on the context. Endocytosed in target cells via its receptor PLXNB2 and translocates to the cytoplasm or nucleus. Under stress conditions, localizes to the cytoplasm and promotes the assembly of stress granules (SGs): specifically cleaves a subset of tRNAs within anticodon loops to produce tRNA-derived stress-induced fragments (tiRNAs), resulting in translation repression and inhibition of cell proliferation. tiRNas also prevent formation of apoptosome, thereby promoting cell survival. Preferentially cleaves RNAs between a pyrimidine and an adenosine residue, suggesting that it cleaves the anticodon loop of tRNA(Ala) (32-UUAGCAU-38) after positions 33 and 36. Cleaves a subset of tRNAs, including tRNA(Ala), tRNA(Glu), tRNA(Gly), tRNA(Lys), tRNA(Val), tRNA(His), tRNA(Asp) and tRNA(Sec). Under growth conditions and in differentiated cells, translocates to the nucleus and stimulates ribosomal RNA (rRNA) transcription, including that containing the initiation site sequences of 45S rRNA, thereby promoting cell growth and proliferation. Angiogenin induces vascularization of normal and malignant tissues via its ability to promote rRNA transcription. Involved in hematopoietic stem and progenitor cell (HSPC) growth and survival by promoting rRNA transcription in growth conditions and inhibiting translation in response to stress, respectively. Mediates the crosstalk between myeloid and intestinal epithelial cells to protect the intestinal epithelial barrier integrity: secreted by myeloid cells and promotes intestinal epithelial cells proliferation and survival. Also mediates osteoclast-endothelial cell crosstalk in growing bone: produced by osteoclasts and protects the neighboring vascular cells against senescence by promoting rRNA transcription. The sequence is that of Angiogenin (ANG) from Saimiri sciureus (Common squirrel monkey).